The chain runs to 313 residues: Foldase protein PrsA (313 aa).

An N-terminal signal peptide occupies residues 1–20 (MKKKLLAGAITLLSVATLAA). Cys-21 is lipidated: N-palmitoyl cysteine. Residue Cys-21 is the site of S-diacylglycerol cysteine attachment. The region spanning 143 to 241 (TPDVTAQIIR…SQYYIVKLTK (99 aa)) is the PpiC domain.

Belongs to the PrsA family.

It localises to the cell membrane. The enzyme catalyses [protein]-peptidylproline (omega=180) = [protein]-peptidylproline (omega=0). Its function is as follows. Plays a major role in protein secretion by helping the post-translocational extracellular folding of several secreted proteins. This Streptococcus pneumoniae (strain ATCC BAA-255 / R6) protein is Foldase protein PrsA.